A 220-amino-acid chain; its full sequence is Flagellin A2 (220 aa).

The propeptide occupies 1–11; that stretch reads MFNNITDDDRG. Asn78, Asn95, Asn112, and Asn124 each carry an N-linked (GlcNAc...) asparagine glycan.

The protein belongs to the archaeal flagellin family. In terms of processing, glycosylated by a pentasaccharide similar to the S-layer glycoprotein, probably comprising a hexose, 2 hexuronic acids, a methyl ester of a hexuronic acid and mannose.

It is found in the archaeal flagellum. Flagellin that plays both structural and regulatory roles in flagella biosynthesis. Does not constitute a major flagellin in terms of abundance contrary to FlgA1: may regulate the flagella-dependent swimming motility depending on the relative abundance of FlgA1. Not involved in PibD-dependent surface adhesion. In Haloferax volcanii (strain ATCC 29605 / DSM 3757 / JCM 8879 / NBRC 14742 / NCIMB 2012 / VKM B-1768 / DS2) (Halobacterium volcanii), this protein is Flagellin A2 (flgA2).